The following is a 195-amino-acid chain: UPF0167 protein CbrC (195 aa).

Belongs to the UPF0167 family.

The polypeptide is UPF0167 protein CbrC (cbrC) (Escherichia coli (strain K12)).